The following is a 556-amino-acid chain: Genetic interactor of prohibitins 3, mitochondrial (556 aa).

The N-terminal 21 residues, 1 to 21 (MLNLCHALRGVRQFSCSVIVK), are a transit peptide targeting the mitochondrion. Positions 113-305 (ESTLNDILNY…LFDLPGYSTS (193 aa)) constitute a CP-type G domain.

Belongs to the TRAFAC class YlqF/YawG GTPase family. GEP3 subfamily.

Its subcellular location is the mitochondrion. In terms of biological role, interacts genetically with prohibitins and thus may be involved in the mitochondrial lipid metabolism. The chain is Genetic interactor of prohibitins 3, mitochondrial (GEP3) from Saccharomyces cerevisiae (strain ATCC 204508 / S288c) (Baker's yeast).